A 317-amino-acid chain; its full sequence is MTDKLTSLRQITTVVADTGDIAAMKLYQPQDATTNPSIILNAAQIPEYRKLIDEAIAWAREQSSDHAQQIVDATDKLAVNIGLEILKLIPGRISTEVDARLSYDTVASVAKAKRLIKLYNEAGISNDRILIKLASTWQGIRAAEQLEKEGINCNLTLLFSFAQARACAEAGVFLISPFVGRILDWYKANGDQKEFAPSEDPGVVSVTEIYQYYKKHGYKTVVMGASFRNLGEIIELAGCDRLTIAPSLLKELAESEGPVERKLAYTGEIQAKPAPLTEAEFYWQHNQDPMAVDKLADGIRKFAIDQGKLEKMISDLL.

Lys132 functions as the Schiff-base intermediate with substrate in the catalytic mechanism.

Belongs to the transaldolase family. Type 1 subfamily. Homodimer.

It localises to the cytoplasm. It catalyses the reaction D-sedoheptulose 7-phosphate + D-glyceraldehyde 3-phosphate = D-erythrose 4-phosphate + beta-D-fructose 6-phosphate. It participates in carbohydrate degradation; pentose phosphate pathway; D-glyceraldehyde 3-phosphate and beta-D-fructose 6-phosphate from D-ribose 5-phosphate and D-xylulose 5-phosphate (non-oxidative stage): step 2/3. Functionally, transaldolase is important for the balance of metabolites in the pentose-phosphate pathway. This chain is Transaldolase, found in Yersinia pseudotuberculosis serotype O:1b (strain IP 31758).